A 564-amino-acid polypeptide reads, in one-letter code: Diacylglycerol kinase epsilon (564 aa).

Residues 20 to 40 (LVLWTLCSVLLPVFITLWCSL) form a helical membrane-spanning segment. 2 Phorbol-ester/DAG-type zinc fingers span residues 57 to 106 (KHCW…RFPC) and 121 to 174 (PHHW…SEKC). A DAGKc domain is found at 212 to 353 (KQWTPLIILA…LDRWKVQVTN (142 aa)).

Belongs to the eukaryotic diacylglycerol kinase family. In terms of tissue distribution, highly expressed in brain and heart. In brain, highly expressed in Purkinje cells of the cerebellum, pyramidal cells of the hippocampus, mitral cells of the olfactory bulb, and neurons of the substantia nigra. Lower expression in neurons of the thalamus, superior olive, and lateral reticular nucleus is also detected. Expressed in platelets.

It is found in the membrane. Its subcellular location is the cytoplasm. The enzyme catalyses a 1,2-diacyl-sn-glycerol + ATP = a 1,2-diacyl-sn-glycero-3-phosphate + ADP + H(+). It carries out the reaction 1-hexadecanoyl-2-(5Z,8Z,11Z,14Z-eicosatetraenoyl)-sn-glycerol + ATP = 1-hexadecanoyl-2-(5Z,8Z,11Z,14Z-eicosatetraenoyl)-sn-glycero-3-phosphate + ADP + H(+). It catalyses the reaction 1-octadecanoyl-2-(5Z,8Z,11Z,14Z-eicosatetraenoyl)-sn-glycerol + ATP = 1-octadecanoyl-2-(5Z,8Z,11Z,14Z-eicosatetraenoyl)-sn-glycero-3-phosphate + ADP + H(+). The catalysed reaction is 1-eicosanoyl-2-(5Z,8Z,11Z,14Z)-eicosatetraenoyl-sn-glycerol + ATP = 1-eicosanoyl-2-(5Z,8Z,11Z,14Z)-eicosatetraenoyl-sn-glycero-3-phosphate + ADP + H(+). The enzyme catalyses 1,2-di-(5Z,8Z,11Z,14Z)-eicosatetraenoyl-sn-glycerol + ATP = 1,2-di-(5Z,8Z,11Z,14Z)-eicosatetraenoyl-sn-glycero-3-phosphate + ADP + H(+). It carries out the reaction 1-octadecanoyl-2-(9Z,12Z)-octadecadienoyl-sn-glycerol + ATP = 1-octadecanoyl-2-(9Z,12Z-octadecadienoyl)-sn-glycero-3-phosphate + ADP + H(+). It catalyses the reaction 1,2-di-(9Z,12Z-octadecadienoyl)-sn-glycerol + ATP = 1,2-di-(9Z,12Z-octadecadienoyl)-sn-glycero-3-phosphate + ADP + H(+). The catalysed reaction is 1,2-di-(9Z-octadecenoyl)-sn-glycerol + ATP = 1,2-di-(9Z-octadecenoyl)-sn-glycero-3-phosphate + ADP + H(+). It functions in the pathway lipid metabolism; glycerolipid metabolism. In terms of biological role, membrane-bound diacylglycerol kinase that converts diacylglycerol/DAG into phosphatidic acid/phosphatidate/PA and regulates the respective levels of these two bioactive lipids. Thereby, acts as a central switch between the signaling pathways activated by these second messengers with different cellular targets and opposite effects in numerous biological processes. Also plays an important role in the biosynthesis of complex lipids. Displays specificity for diacylglycerol substrates with an arachidonoyl acyl chain at the sn-2 position, with the highest activity toward 1-octadecanoyl-2-(5Z,8Z,11Z,14Z-eicosatetraenoyl)-sn-glycerol the main diacylglycerol intermediate within the phosphatidylinositol turnover cycle. Can also phosphorylate diacylglycerol substrates with a linoleoyl acyl chain at the sn-2 position but much less efficiently. This chain is Diacylglycerol kinase epsilon (Dgke), found in Mus musculus (Mouse).